The primary structure comprises 937 residues: FNIP repeat-containing protein DDB_G0271996 (937 aa).

Residues M1–V12 show a composition bias toward polar residues. A disordered region spans residues M1–E60. The segment covering N13–E60 has biased composition (low complexity). 4 FNIP repeats span residues F307–R350, P354–N394, F396–N439, and Y598–S640. A coiled-coil region spans residues V677 to H769. A compositionally biased stretch (low complexity) spans K719–E729. Disordered regions lie at residues K719–H767, S794–D823, and Q910–K937. Positions L751–D763 are enriched in acidic residues. 2 stretches are compositionally biased toward low complexity: residues S794–S814 and Q910–N929. The stretch at I902–K937 forms a coiled coil.

This Dictyostelium discoideum (Social amoeba) protein is FNIP repeat-containing protein DDB_G0271996.